Consider the following 954-residue polypeptide: Kinesin-like protein KIN-14A (954 aa).

The Calponin-homology (CH) domain maps to 24-142 (ALRRHQAATW…CVISLKSYHE (119 aa)). Residues 242 to 293 (LSRQLEKEQSSNSQVENRRRLLQAQESELLELKSMFQEVKIDFRTLKTQFQD) adopt a coiled-coil conformation. In terms of domain architecture, Kinesin motor spans 332–651 (NIRVFCRIRP…LKFAQRASCV (320 aa)). An ATP-binding site is contributed by 413–420 (GQTGSGKT). The stretch at 656-692 (AHANKESNEIRELKEQVENLKRALAAKELEKSSFKLK) forms a coiled coil. Residues 697 to 709 (VRERAKQVPERTP) show a composition bias toward basic and acidic residues. 3 disordered regions span residues 697-743 (VRER…TKLN), 824-858 (NLEV…RKSI), and 882-954 (PAKI…KRWL). Composition is skewed to polar residues over residues 831–849 (DEPS…NATK) and 886–898 (ANST…SSIT).

The protein belongs to the TRAFAC class myosin-kinesin ATPase superfamily. Kinesin family. KIN-14 subfamily.

The sequence is that of Kinesin-like protein KIN-14A from Oryza sativa subsp. japonica (Rice).